The following is a 355-amino-acid chain: Galectin-9 (355 aa).

Galectin domains follow at residues 17–148 and 227–355; these read FSGT…ISFQ and FITT…HVQT. A beta-D-galactoside contacts are provided by residues Asn48, His61, Arg65, Asn75, 82 to 88, His267, Arg271, Thr281, and 287 to 293; these read WGPEERK and WGSEERS.

Monomer. Peripheral blood leukocytes and lymphatic tissues. Expressed in lung, liver, breast and kidney with higher levels in tumor endothelial cells than normal endothelium (at protein level). Expressed in trophoblast cells in decidua and placenta in pregnancy (at protein level). Isoform 2 is the most abundant isoform expressed in endothelial cells. Upon endothelial cell activation isoform 2 expression decreases while expression of isoform 3 and isoform 5 increases. Isoform 4 decreases in pathological pregnancy.

It is found in the cytoplasm. Its subcellular location is the nucleus. The protein resides in the secreted. In terms of biological role, binds galactosides. Has high affinity for the Forssman pentasaccharide. Ligand for HAVCR2/TIM3. Binding to HAVCR2 induces T-helper type 1 lymphocyte (Th1) death. Also stimulates bactericidal activity in infected macrophages by causing macrophage activation and IL1B secretion which restricts intracellular bacterial growth. Ligand for P4HB; the interaction retains P4HB at the cell surface of Th2 T-helper cells, increasing disulfide reductase activity at the plasma membrane, altering the plasma membrane redox state and enhancing cell migration. Ligand for CD44; the interaction enhances binding of SMAD3 to the FOXP3 promoter, leading to up-regulation of FOXP3 expression and increased induced regulatory T (iTreg) cell stability and suppressive function. Promotes ability of mesenchymal stromal cells to suppress T-cell proliferation. Expands regulatory T-cells and induces cytotoxic T-cell apoptosis following virus infection. Activates ERK1/2 phosphorylation inducing cytokine (IL-6, IL-8, IL-12) and chemokine (CCL2) production in mast and dendritic cells. Inhibits degranulation and induces apoptosis of mast cells. Induces maturation and migration of dendritic cells. Inhibits natural killer (NK) cell function. Can transform NK cell phenotype from peripheral to decidual during pregnancy. Astrocyte derived galectin-9 enhances microglial TNF production. May play a role in thymocyte-epithelial interactions relevant to the biology of the thymus. May provide the molecular basis for urate flux across cell membranes, allowing urate that is formed during purine metabolism to efflux from cells and serving as an electrogenic transporter that plays an important role in renal and gastrointestinal urate excretion. Highly selective to the anion urate. Its function is as follows. Acts as an eosinophil chemoattractant. It also inhibits angiogenesis. Suppresses IFNG production by natural killer cells. The protein is Galectin-9 (LGALS9) of Homo sapiens (Human).